Here is a 500-residue protein sequence, read N- to C-terminus: MGEVVNLSLSQRANHVLTHLYNNQESHIPYKKNQPVNFFNNVFLSTSKTHTGHTNYAPRALVFDLRYGLGSLNKHEYHETPTNFDNIPQSDRFNLDKQIAKNQYQQNLDKGIASTEAESILSVENTKFWTDYNKLIYSPSSLNTLQNYDIGQSPEYGSHHNFPQIKFNTFEVGQKEFSDSTSNLDSQLDSFRRLLEQCDLLQGVNVVSELDSAWGGFTTSLLTEFIDEYFNGGISNTKNSIWIYGLHSQGPSGRSSINEAISRIKTTIELSKNSTLFFPINTAPFSKGIFSSDTIEDNILRGEHERKIVNDIKLKSIDSSKVTDINSLGSIISNVDISAYYNMSAPKPQDSSSGYIDLSVPTTVPTKTSSKVINEYFVKNYVIPTEQGKLEEKFAFKDKGIPSNVYRSRDITSIIKVDTFPYKIFNSQKQFNFYSEFNVSTDYRIELKAYKDLIKNVRLNSQQLMGIIEDKAELIEDISHILEHYTISNEPSDEESDDDY.

The protein belongs to the misato family.

It is found in the mitochondrion. In terms of biological role, involved in the partitioning of the mitochondrial organelle and mitochondrial DNA (mtDNA) inheritance. The protein is Protein DML1 (DML1) of Scheffersomyces stipitis (strain ATCC 58785 / CBS 6054 / NBRC 10063 / NRRL Y-11545) (Yeast).